A 500-amino-acid polypeptide reads, in one-letter code: NAD(P)H-quinone oxidoreductase chain 4, chloroplastic (500 aa).

14 helical membrane-spanning segments follow: residues 4 to 24 (FPWLTILVVLPIFAGSLIFFL), 37 to 57 (ISICLLEFLLMTYAFCYHFQL), 87 to 107 (LGSILLTGFITTLATLAAWPI), 113 to 130 (LFYFLMLAMYSGQIGLFS), 134 to 154 (LLLFFIMWELELIPVYLLLSM), 167 to 187 (FILYTAGGSIFFLIGVLGMGL), 211 to 231 (ILLYFGFLIAYAVKLPIIPLH), 242 to 262 (HYSTCMLLAGILLKMGAYGLI), 274 to 294 (YLFSPWLVIIGAIQIIYAALT), 313 to 333 (MGFIIIGIGSITNIGLNGAIL), 334 to 354 (QILSHGFIGATLFFLAGTASD), 386 to 406 (LALPGMSGFVAELVVFFGLIT), 417 to 437 (LITFVMAIGMILTPIYLLSML), and 462 to 482 (LFILICIFLPVIGIGIYPDFV).

Belongs to the complex I subunit 4 family.

Its subcellular location is the plastid. It localises to the chloroplast thylakoid membrane. It carries out the reaction a plastoquinone + NADH + (n+1) H(+)(in) = a plastoquinol + NAD(+) + n H(+)(out). The catalysed reaction is a plastoquinone + NADPH + (n+1) H(+)(in) = a plastoquinol + NADP(+) + n H(+)(out). The chain is NAD(P)H-quinone oxidoreductase chain 4, chloroplastic (ndhD) from Hordeum vulgare (Barley).